The chain runs to 337 residues: Ketol-acid reductoisomerase (NADP(+)) (337 aa).

Residues 3–183 enclose the KARI N-terminal Rossmann domain; it reads VEVFYDDDAD…GGTRAGAIRT (181 aa). NADP(+) is bound by residues 26–29, S52, S54, and 84–87; these read YGSQ and DTAQ. H109 is an active-site residue. Residue G135 participates in NADP(+) binding. The region spanning 184–329 is the KARI C-terminal knotted domain; sequence TFTEETETDL…SKLRGMMSWV (146 aa). D192, E196, E228, and E232 together coordinate Mg(2+). S253 lines the substrate pocket.

Belongs to the ketol-acid reductoisomerase family. It depends on Mg(2+) as a cofactor.

It carries out the reaction (2R)-2,3-dihydroxy-3-methylbutanoate + NADP(+) = (2S)-2-acetolactate + NADPH + H(+). The enzyme catalyses (2R,3R)-2,3-dihydroxy-3-methylpentanoate + NADP(+) = (S)-2-ethyl-2-hydroxy-3-oxobutanoate + NADPH + H(+). It functions in the pathway amino-acid biosynthesis; L-isoleucine biosynthesis; L-isoleucine from 2-oxobutanoate: step 2/4. It participates in amino-acid biosynthesis; L-valine biosynthesis; L-valine from pyruvate: step 2/4. In terms of biological role, involved in the biosynthesis of branched-chain amino acids (BCAA). Catalyzes an alkyl-migration followed by a ketol-acid reduction of (S)-2-acetolactate (S2AL) to yield (R)-2,3-dihydroxy-isovalerate. In the isomerase reaction, S2AL is rearranged via a Mg-dependent methyl migration to produce 3-hydroxy-3-methyl-2-ketobutyrate (HMKB). In the reductase reaction, this 2-ketoacid undergoes a metal-dependent reduction by NADPH to yield (R)-2,3-dihydroxy-isovalerate. This Salinispora arenicola (strain CNS-205) protein is Ketol-acid reductoisomerase (NADP(+)).